We begin with the raw amino-acid sequence, 64 residues long: Large ribosomal subunit protein bL35 (64 aa).

Residues methionine 1–lysine 14 are compositionally biased toward basic residues. The disordered stretch occupies residues methionine 1–aspartate 48. Basic and acidic residues predominate over residues leucine 21–proline 36.

Belongs to the bacterial ribosomal protein bL35 family.

The polypeptide is Large ribosomal subunit protein bL35 (Corynebacterium aurimucosum (strain ATCC 700975 / DSM 44827 / CIP 107346 / CN-1) (Corynebacterium nigricans)).